A 452-amino-acid chain; its full sequence is Gastrin/cholecystokinin type B receptor (452 aa).

Residues 1–57 lie on the Extracellular side of the membrane; sequence MELLKLNRSLPGPGPGAALCRPEGPLLNGSGAGNLSCEPPRIRGAGTRELELAVRIT. N-linked (GlcNAc...) asparagine glycosylation is found at Asn7, Asn28, and Asn34. A helical transmembrane segment spans residues 58–78; sequence LYAAIFLMSVAGNVLIIVVLG. Topologically, residues 79–99 are cytoplasmic; that stretch reads LSRRLRTVTNAFLLSLAVSDL. Residues 100–120 traverse the membrane as a helical segment; that stretch reads LLAVACMPFTLLPNLMGTFIF. The Extracellular portion of the chain corresponds to 121–127; sequence GTVVCKA. Residues Cys125 and Cys203 are joined by a disulfide bond. Residues 128 to 148 form a helical membrane-spanning segment; it reads VSYFMGVSVSVSTLSLVAIAL. The Cytoplasmic segment spans residues 149 to 171; it reads ERYSAICRPLQARVWQTRSHAAR. The chain crosses the membrane as a helical span at residues 172–192; it reads VIVATWMLSGLLMVPYPVYTA. Topologically, residues 193–218 are extracellular; the sequence is VQPAGPRVLQCMHRWPSARIRQTWSV. The chain crosses the membrane as a helical span at residues 219–239; sequence LLLLLLFFVPGVVMAVAYGLI. The Cytoplasmic segment spans residues 240 to 339; it reads SRELYLGLRF…LLAKKRVVRM (100 aa). Residues 256–285 are disordered; that stretch reads ESQSQVGSQGGLPGGAGQGPAHPNGHCRSE. Residues 263–273 show a composition bias toward gly residues; that stretch reads SQGGLPGGAGQ. Residues 340-360 traverse the membrane as a helical segment; that stretch reads LLVIVVLFFLCWLPVYSANTW. The Extracellular segment spans residues 361–376; the sequence is RAFDGPGAHRALSGAP. A helical transmembrane segment spans residues 377-397; sequence ISFIHLLSYASACVNPLVYCF. Residues 398-452 lie on the Cytoplasmic side of the membrane; that stretch reads MHRRFRQACLDTCARCCPRPPRARPRPLPDEDPPTPSIASLSRLSYTTISTLGPG. Cys413 carries S-palmitoyl cysteine lipidation.

The protein belongs to the G-protein coupled receptor 1 family.

The protein localises to the cell membrane. Its function is as follows. Receptor for gastrin and cholecystokinin. The CCK-B receptors occur throughout the central nervous system where they modulate anxiety, analgesia, arousal, and neuroleptic activity. This receptor mediates its action by association with G proteins that activate a phosphatidylinositol-calcium second messenger system. The protein is Gastrin/cholecystokinin type B receptor of Sus scrofa (Pig).